A 647-amino-acid chain; its full sequence is Threonine--tRNA ligase (647 aa).

Residues 1–61 (MIKITFPDGA…EEDGSIEIVT (61 aa)) form the TGS domain. The segment at 240-538 (DHRKLGKELD…LIETYKGAFP (299 aa)) is catalytic. Positions 334, 385, and 515 each coordinate Zn(2+).

This sequence belongs to the class-II aminoacyl-tRNA synthetase family. Homodimer. It depends on Zn(2+) as a cofactor.

The protein localises to the cytoplasm. It carries out the reaction tRNA(Thr) + L-threonine + ATP = L-threonyl-tRNA(Thr) + AMP + diphosphate + H(+). Catalyzes the attachment of threonine to tRNA(Thr) in a two-step reaction: L-threonine is first activated by ATP to form Thr-AMP and then transferred to the acceptor end of tRNA(Thr). Also edits incorrectly charged L-seryl-tRNA(Thr). The protein is Threonine--tRNA ligase of Streptococcus pyogenes serotype M2 (strain MGAS10270).